The sequence spans 449 residues: C4-dicarboxylate transport protein 1 (449 aa).

The next 9 helical transmembrane spans lie at 14–34 (SIFLQVVIGLVIGVICGVGIP), 47–67 (FIKLIKMLIALIVFCVVVNGI), 83–103 (SVIYFEILTTIALVLGLVVAY), 157–177 (ILQVLLFSVLFGSALNLVGEQ), 195–215 (IMGMIVRLAPLGVFGAVAFTT), 226–246 (LGALVLVFYATCLVFVMAVLG), 312–332 (FSIYLTLAVVFIAHVTGTPLA), 359–379 (VILAATLTAVPAIPVAGLVLV), and 385–405 (FMGIGRALTNLIGNCVATVTI).

The protein belongs to the dicarboxylate/amino acid:cation symporter (DAACS) (TC 2.A.23) family.

Its subcellular location is the cell inner membrane. Responsible for the transport of dicarboxylates such as succinate, fumarate, and malate from the periplasm across the membrane. This Pseudomonas aeruginosa (strain UCBPP-PA14) protein is C4-dicarboxylate transport protein 1.